We begin with the raw amino-acid sequence, 192 residues long: Peptidyl-tRNA hydrolase (192 aa).

Residue His-17 coordinates tRNA. His-22 acts as the Proton acceptor in catalysis. Residues Phe-68, Asn-70, and Asn-116 each coordinate tRNA.

It belongs to the PTH family. Monomer.

The protein localises to the cytoplasm. It catalyses the reaction an N-acyl-L-alpha-aminoacyl-tRNA + H2O = an N-acyl-L-amino acid + a tRNA + H(+). Functionally, hydrolyzes ribosome-free peptidyl-tRNAs (with 1 or more amino acids incorporated), which drop off the ribosome during protein synthesis, or as a result of ribosome stalling. Catalyzes the release of premature peptidyl moieties from peptidyl-tRNA molecules trapped in stalled 50S ribosomal subunits, and thus maintains levels of free tRNAs and 50S ribosomes. This is Peptidyl-tRNA hydrolase from Stenotrophomonas maltophilia (strain K279a).